A 141-amino-acid polypeptide reads, in one-letter code: Hemoglobin subunit alpha (141 aa).

A Globin domain is found at 1-141 (VLSPADKTNV…VSTVLTSKYR (141 aa)). The residue at position 3 (S3) is a Phosphoserine. The residue at position 7 (K7) is an N6-succinyllysine. Position 8 is a phosphothreonine (T8). The residue at position 11 (K11) is an N6-succinyllysine. K16 bears the N6-acetyllysine; alternate mark. K16 bears the N6-succinyllysine; alternate mark. At Y24 the chain carries Phosphotyrosine. The residue at position 35 (S35) is a Phosphoserine. The residue at position 40 (K40) is an N6-succinyllysine. H58 lines the O2 pocket. H87 lines the heme b pocket. S102 is modified (phosphoserine). T108 is modified (phosphothreonine). S124 and S131 each carry phosphoserine. T134 and T137 each carry phosphothreonine. The residue at position 138 (S138) is a Phosphoserine.

It belongs to the globin family. As to quaternary structure, heterotetramer of two alpha chains and two beta chains. As to expression, red blood cells.

Its function is as follows. Involved in oxygen transport from the lung to the various peripheral tissues. In terms of biological role, hemopressin acts as an antagonist peptide of the cannabinoid receptor CNR1. Hemopressin-binding efficiently blocks cannabinoid receptor CNR1 and subsequent signaling. The chain is Hemoglobin subunit alpha (HBA) from Cynopterus sphinx (Indian short-nosed fruit bat).